The following is a 158-amino-acid chain: Cyclic pyranopterin monophosphate synthase (158 aa).

Substrate contacts are provided by residues L76–H78 and M114–E115. Residue D129 is part of the active site.

Belongs to the MoaC family. Homohexamer; trimer of dimers.

It catalyses the reaction (8S)-3',8-cyclo-7,8-dihydroguanosine 5'-triphosphate = cyclic pyranopterin phosphate + diphosphate. The protein operates within cofactor biosynthesis; molybdopterin biosynthesis. In terms of biological role, catalyzes the conversion of (8S)-3',8-cyclo-7,8-dihydroguanosine 5'-triphosphate to cyclic pyranopterin monophosphate (cPMP). The chain is Cyclic pyranopterin monophosphate synthase from Shewanella sediminis (strain HAW-EB3).